A 159-amino-acid polypeptide reads, in one-letter code: Ribosome maturation factor RimP (159 aa).

This sequence belongs to the RimP family.

The protein localises to the cytoplasm. In terms of biological role, required for maturation of 30S ribosomal subunits. This Geobacter sulfurreducens (strain ATCC 51573 / DSM 12127 / PCA) protein is Ribosome maturation factor RimP.